A 549-amino-acid polypeptide reads, in one-letter code: Glucose-6-phosphate isomerase (549 aa).

Glu-355 (proton donor) is an active-site residue. Active-site residues include His-386 and Lys-514.

Belongs to the GPI family.

It is found in the cytoplasm. The catalysed reaction is alpha-D-glucose 6-phosphate = beta-D-fructose 6-phosphate. It participates in carbohydrate biosynthesis; gluconeogenesis. The protein operates within carbohydrate degradation; glycolysis; D-glyceraldehyde 3-phosphate and glycerone phosphate from D-glucose: step 2/4. Catalyzes the reversible isomerization of glucose-6-phosphate to fructose-6-phosphate. This is Glucose-6-phosphate isomerase from Enterobacter sp. (strain 638).